Consider the following 405-residue polypeptide: MDHLVFEVGTALVLVAIASVIANKIKFSIIPFLIVLGMLVGPHAPKMGIIDLTFIQSSEIIEFFGRMGVLFLLFYLGLEFSVGKLIKSGKSIAVGGTIYILINFSLGLLYGFITGFSFLEVLILAGVITISSSAIVAKVLVDLKRTANPETELILGIIMFEDIFLAVYLSVVSGLILGDATSVGSALLSILIAFGYMLLFFIAARKLPPLLNKLLDIRSNEVFIIVIFAALFFIAGFSETIHVAEAIGALLLGLVFSETEHSDRIEHLVVPFRDFFGAMFFFSFGLSIDPFSLGEAVWLALGAVILTILGNFIAGMVAGRRAGLSHKASSNIGLTIVSRGEFSIIVANLGIAGGLSATLKPFAALYVLILAILGPLVTKESKRIYRLLNKVFKWKPEVQPAKKQG.

Transmembrane regions (helical) follow at residues 3 to 23, 29 to 49, 60 to 80, 85 to 105, 108 to 128, 153 to 173, 183 to 203, 222 to 242, 268 to 288, 297 to 317, 332 to 352, and 357 to 377; these read HLVFEVGTALVLVAIASVIAN, IIPFLIVLGMLVGPHAPKMGI, IIEFFGRMGVLFLLFYLGLEF, LIKSGKSIAVGGTIYILINFS, LLYGFITGFSFLEVLILAGVI, LILGIIMFEDIFLAVYLSVVS, VGSALLSILIAFGYMLLFFIA, VFIIVIFAALFFIAGFSETIH, LVVPFRDFFGAMFFFSFGLSI, VWLALGAVILTILGNFIAGMV, IGLTIVSRGEFSIIVANLGIA, and ATLKPFAALYVLILAILGPLV.

It belongs to the monovalent cation:proton antiporter 2 (CPA2) transporter (TC 2.A.37) family. The transporter is composed of the integral membrane protein KhtU and the regulatory protein KhtT.

It localises to the cell membrane. With respect to regulation, potassium antiport activity requires the presence of KhtT. Activity is also modulated by KhtS. Has higher activity at alkaline pH. Potassium/proton antiporter that mediates the efflux of potassium ions from the cell. Can also mediate rubidium/proton antiport, but has no permeability for sodium or lithium ions. In the absence of KhtT, does not have antiport activity, but can catalyze potassium efflux. Involved in protection of the cell from methylglyoxal, a toxic by-product of glycolysis, via activation by S-lactoyl-BSH of the antiporter activity, leading to cytoplasmic acidification and methylglyoxal resistance. This is K(+)/H(+) antiporter subunit KhtU from Bacillus subtilis (strain 168).